Reading from the N-terminus, the 77-residue chain is Oxyopinin-4a (77 aa).

The first 20 residues, 1 to 20, serve as a signal peptide directing secretion; it reads MKISQVFIFVFLLMISVAWA. The propeptide occupies 21 to 47; sequence NEAYEEESNYLSERFDADVEEITPEFR. Residues Cys51 and Cys57 are joined by a disulfide bond.

Expressed by the venom gland.

The protein resides in the secreted. It localises to the target cell membrane. Its function is as follows. Disrupts cell membranes through the formation of pores. Has antibacterial activity against Gram-positive bacteria S.aureus (MIC=10 uM) and B.subtilis (MIC=0.5 uM) as well as Gram-negative bacteria P.fluorescens (MIC=1 uM) and E.coli (MIC=0.5 uM). Has hemolytic activity against human erythrocytes (EC(50)=7 uM). The sequence is that of Oxyopinin-4a from Oxyopes takobius (Lynx spider).